We begin with the raw amino-acid sequence, 302 residues long: Syntaxin-17 (302 aa).

Ser2 is modified (N-acetylserine). The Cytoplasmic portion of the chain corresponds to 2–228 (SEDEEKVKLR…KNLGKAAKYK (227 aa)). Lys41 carries the N6-acetyllysine modification. Residues 53–123 (EEHINAGRTV…EELKKQFNDE (71 aa)) are a coiled coil. Tyr157 bears the Phosphotyrosine; by ABL1 mark. In terms of domain architecture, t-SNARE coiled-coil homology spans 162-224 (IPQDQNAAES…EEGTKNLGKA (63 aa)). Residues 229–249 (LAALPVAGALIGGMVGGPIGL) traverse the membrane as a helical segment. A necessary and sufficient for localization to autophagosome region spans residues 229 to 275 (LAALPVAGALIGGMVGGPIGLLAGFKVAGIAAALGGGVLGFTGGKLI). The Lumenal portion of the chain corresponds to 250–254 (LAGFK). Residues 255–275 (VAGIAAALGGGVLGFTGGKLI) traverse the membrane as a helical segment. Topologically, residues 276–302 (QRKKQKMMEKLTSSCPDLPSQTDKKCS) are cytoplasmic. At Ser289 the chain carries Phosphoserine. Positions 299-302 (KKCS) match the Endoplasmic reticulum retention signal motif.

The protein belongs to the syntaxin family. In terms of assembly, forms a SNARE complex composed of VAMP8, SNAP29 and STX17 involved in fusion of autophagosome with lysosome. Interacts with VAMP7 and VTI1B. Probably interacts with BET1, SCFD1 and SEC22B. Interacts with PTPN2 and ABL1; involved in STX17 phosphorylation. Interacts with COPB1. Interacts with TMED9 and TMED10; the interaction is direct. Interacts with ATG14. Interacts with RUBCNL/PACER; promoting targeting of RUBCNL/PACER to autophagosome. Interacts with VAMP8, SNAP29, VPS39 and VPS41; these interactions are increased in the absence of TMEM39A. Interacts with IRGM; promoting STX17 recruitment to autophagosomes. Interacts with ATG8 proteins GABARAP and MAP1LC3B. Interacts with RNF115; this interaction enhances STX17 stability which in turn promotes autophagosome maturation. Interacts with RAB39A (GTP-bound); the interaction promotes autophagosome-lysosome membrane fusion driven by STX17-SNAP29-VAMP8. Interacts with RAB39B; the interaction may promote a different fonction in autophagy as compared with RAB39A. (Microbial infection) The interactions with VAMP8, SNAP29 and VPS41 are decreased in presence of SARS coronavirus-2/SARS-CoV-2 ORF3A protein. Phosphorylated at Tyr-157 probably by ABL1. Dephosphorylation by PTPN2; regulates exit from the endoplasmic reticulum. In terms of processing, (Microbial infection) Cleaved by the L.pneumophila serine protease Lpg1137, impairing endoplasmic reticulum-mitochondria communication, leading to inhibit autophagy.

It is found in the endoplasmic reticulum membrane. Its subcellular location is the smooth endoplasmic reticulum membrane. The protein localises to the endoplasmic reticulum-Golgi intermediate compartment membrane. It localises to the cytoplasmic vesicle. The protein resides in the autophagosome membrane. It is found in the COPII-coated vesicle membrane. Its subcellular location is the cytoplasm. The protein localises to the cytosol. It localises to the mitochondrion membrane. The protein resides in the autolysosome membrane. SNAREs, soluble N-ethylmaleimide-sensitive factor-attachment protein receptors, are essential proteins for fusion of cellular membranes. SNAREs localized on opposing membranes assemble to form a trans-SNARE complex, an extended, parallel four alpha-helical bundle that drives membrane fusion. STX17 is a SNARE of the autophagosome involved in autophagy through the direct control of autophagosome membrane fusion with the lysosome membrane. May also play a role in the early secretory pathway where it may maintain the architecture of the endoplasmic reticulum-Golgi intermediate compartment/ERGIC and Golgi and/or regulate transport between the endoplasmic reticulum, the ERGIC and the Golgi. This chain is Syntaxin-17, found in Homo sapiens (Human).